A 133-amino-acid chain; its full sequence is NADPH-dependent 7-cyano-7-deazaguanine reductase (133 aa).

Cys-46 functions as the Thioimide intermediate in the catalytic mechanism. Asp-53 serves as the catalytic Proton donor. Residues 68–70 and 87–88 contribute to the substrate site; these read VEL and HE.

It belongs to the GTP cyclohydrolase I family. QueF type 1 subfamily.

Its subcellular location is the cytoplasm. The catalysed reaction is 7-aminomethyl-7-carbaguanine + 2 NADP(+) = 7-cyano-7-deazaguanine + 2 NADPH + 3 H(+). Its pathway is tRNA modification; tRNA-queuosine biosynthesis. Functionally, catalyzes the NADPH-dependent reduction of 7-cyano-7-deazaguanine (preQ0) to 7-aminomethyl-7-deazaguanine (preQ1). This chain is NADPH-dependent 7-cyano-7-deazaguanine reductase, found in Parasynechococcus marenigrum (strain WH8102).